Here is a 488-residue protein sequence, read N- to C-terminus: MRHLLLLFLCPCAIGVAFHLWLFNFSGLFTWFPVWSQRSYDIVVGVLSARHNHELRNVIRHTWLQHLKQHSSLSQRILVKFIIGSHGCDIPVEDREDPYSCKLLNITNPTFKQEIESFSIPDIAALLTEHHVVNVNFRVLYPVVITRLGVFQHDSAAGFHRNITVKLFQTEHEEALFSARFSPASSGVQVNGIWYKPVEQFILPEGFEGTVVWESHDPEGLLSGNVHRVIVNDGGGIFRITTVKEGLLPYEFTEGVEGIAGGFTYTIHEGEALLNTLETRPERIQIHLAALEKEDALLQEESTTFQDIVFVHVVDTYRNVPSKLLNFYQWTAEFTSFEFLLKTDDDCFIDIENVLEKIAHKQLQKENTWWGNFRLNWAVDRTGKWQELEYLSPAYPAFACGSGYVISQDIVQWLASNSQRLKTYQGEDVSMGIWMSAIGPSRYQDSHWLCEKKCEAGMLSSPQYTPQELLELWQQKERCGNPCACEDR.

The Cytoplasmic segment spans residues 1 to 2 (MR). Residues 3 to 23 (HLLLLFLCPCAIGVAFHLWLF) traverse the membrane as a helical; Signal-anchor for type II membrane protein segment. N-linked (GlcNAc...) asparagine glycosylation is found at N24, N105, and N162. The Lumenal segment spans residues 24 to 488 (NFSGLFTWFP…CGNPCACEDR (465 aa)).

It belongs to the glycosyltransferase 31 family.

The protein resides in the golgi apparatus membrane. It localises to the endoplasmic reticulum. It carries out the reaction 3-O-(N-acetyl-beta-D-glucosaminyl-(1-&gt;4)-alpha-D-mannosyl)-L-threonyl-[protein] + UDP-N-acetyl-alpha-D-galactosamine = 3-O-[beta-D-GalNAc-(1-&gt;3)-beta-D-GlcNAc-(1-&gt;4)-alpha-D-Man]-L-Thr-[protein] + UDP + H(+). It participates in protein modification; protein glycosylation. In terms of biological role, beta-1,3-N-acetylgalactosaminyltransferase that synthesizes a unique carbohydrate structure, GalNAc-beta-1-3GlcNAc, on N- and O-glycans. Has no galactose nor galactosaminyl transferase activity toward any acceptor substrate. Involved in alpha-dystroglycan (dag1) glycosylation. The polypeptide is UDP-GalNAc:beta-1,3-N-acetylgalactosaminyltransferase 2 (b3galnt2) (Xenopus tropicalis (Western clawed frog)).